Here is an 83-residue protein sequence, read N- to C-terminus: Weak toxin DE-1 (83 aa).

Residues 1–21 (MKTLLLTLVVVTIVCLDLGYS) form the signal peptide. 4 disulfide bridges follow: cysteine 24–cysteine 45, cysteine 38–cysteine 62, cysteine 64–cysteine 75, and cysteine 76–cysteine 81.

Belongs to the three-finger toxin family. Short-chain subfamily. Type I alpha-neurotoxin sub-subfamily. Expressed by the venom gland.

It localises to the secreted. In Ophiophagus hannah (King cobra), this protein is Weak toxin DE-1.